We begin with the raw amino-acid sequence, 129 residues long: Basic blue protein (129 aa).

The first 33 residues, 1 to 33 (MAKGRGSASWSARAIVTLMAVSVLLLQADYVQA), serve as a signal peptide directing secretion. Positions 34–129 (ATYTVGDSGI…SDMKIAVTAV (96 aa)) constitute a Phytocyanin domain. Cu cation-binding residues include His72, Cys112, His117, and Met122. Cys85 and Cys118 form a disulfide bridge.

As to expression, expressed in the inflorescence and in the transmitting tract of the pistil. Detected in roots, stems, cauline leaves, cotyledons, hypocotyls, guard cells, pistils, sepals, stamen filaments and vascular bundles of roots but not of leaves. Not expressed in petals, anthers or pollen.

The protein resides in the secreted. The protein localises to the extracellular space. It is found in the extracellular matrix. In terms of biological role, forms a concentration gradient along the pollen tube growth path, with a lower level in the stigma papilla cell wall and a higher level in the transmitting tract extracellular matix of the style. The polypeptide is Basic blue protein (ARPN) (Arabidopsis thaliana (Mouse-ear cress)).